Reading from the N-terminus, the 507-residue chain is ATP synthase subunit alpha (507 aa).

170–177 (GDRQTGKT) provides a ligand contact to ATP.

The protein belongs to the ATPase alpha/beta chains family. F-type ATPases have 2 components, CF(1) - the catalytic core - and CF(0) - the membrane proton channel. CF(1) has five subunits: alpha(3), beta(3), gamma(1), delta(1), epsilon(1). CF(0) has three main subunits: a(1), b(2) and c(9-12). The alpha and beta chains form an alternating ring which encloses part of the gamma chain. CF(1) is attached to CF(0) by a central stalk formed by the gamma and epsilon chains, while a peripheral stalk is formed by the delta and b chains.

The protein resides in the cell inner membrane. It catalyses the reaction ATP + H2O + 4 H(+)(in) = ADP + phosphate + 5 H(+)(out). Its function is as follows. Produces ATP from ADP in the presence of a proton gradient across the membrane. The alpha chain is a regulatory subunit. The polypeptide is ATP synthase subunit alpha (Thermosipho africanus (strain TCF52B)).